The primary structure comprises 435 residues: MKFFTAALFASAVSAFAVDSIIPGARVIPATDTLELQHVGAHHHKHPNRRTVTIRSSRNDTDDVSKDFLWGISRANHGGRLLLQKGKKYVIGKKLDLSFLNNIEVQLDGELKFTDDVPYWQKNNFYYSFQKSISFWRWGGQDIKIFGSGVLNGNGQRWYNEFAGQEILDPDNTFYRPILFVTENATRVSVEGITQLNSPCWTNFFVGSNDVSFDNVYIEAFSTNASALPKNTDGFDSYNVKGLSVTNTRVNVGDDCFSPKPNTTDIFVQNLWCNGTHGVSMGSIGQYPGVMDIIEHAYIENVTLLNGQNGARLKAWAGENVGYGRINNITYKNIRIENTDKPVVLDQCYFNVDTATCAEYPSSVNITNITFENVYGTSSGKEGKVVADLVCSPNAVCSDIHLADIDLTSPAGSPPVIICEGIQGDIGVECQSSTS.

The N-terminal stretch at 1 to 15 is a signal peptide; sequence MKFFTAALFASAVSA. Residues Asn59, Asn184, and Asn224 are each glycosylated (N-linked (GlcNAc...) asparagine). The Proton donor role is filled by Asp254. The cysteines at positions 256 and 273 are disulfide-linked. N-linked (GlcNAc...) asparagine glycans are attached at residues Asn262 and Asn274. The active site involves His277. Asn301, Asn328, Asn365, and Asn368 each carry an N-linked (GlcNAc...) asparagine glycan. Cys391 and Cys397 are disulfide-bonded.

Belongs to the glycosyl hydrolase 28 family.

It is found in the secreted. The catalysed reaction is [(1-&gt;4)-alpha-D-galacturonosyl](n) + H2O = alpha-D-galacturonate + [(1-&gt;4)-alpha-D-galacturonosyl](n-1). Specific in hydrolyzing the terminal glycosidic bond of polygalacturonic acid and oligogalacturonates. The polypeptide is Probable exopolygalacturonase B (pgxB) (Aspergillus terreus (strain NIH 2624 / FGSC A1156)).